We begin with the raw amino-acid sequence, 178 residues long: Large ribosomal subunit protein uL5 (178 aa).

The protein belongs to the universal ribosomal protein uL5 family. Part of the 50S ribosomal subunit; part of the 5S rRNA/L5/L18/L25 subcomplex. Contacts the 5S rRNA and the P site tRNA. Forms a bridge to the 30S subunit in the 70S ribosome.

This is one of the proteins that bind and probably mediate the attachment of the 5S RNA into the large ribosomal subunit, where it forms part of the central protuberance. In the 70S ribosome it contacts protein S13 of the 30S subunit (bridge B1b), connecting the 2 subunits; this bridge is implicated in subunit movement. Contacts the P site tRNA; the 5S rRNA and some of its associated proteins might help stabilize positioning of ribosome-bound tRNAs. This chain is Large ribosomal subunit protein uL5, found in Wolbachia pipientis subsp. Culex pipiens (strain wPip).